The sequence spans 785 residues: Disintegrin and metalloproteinase domain-containing protein B (785 aa).

The first 26 residues, 1–26 (MRFLKSALPFVASALSLLSVQAAARS), serve as a signal peptide directing secretion. Topologically, residues 27–703 (QEPSAIQHVS…GSWVEQHKNL (677 aa)) are extracellular. A Peptidase M12B domain is found at 279 to 507 (KQVALVGIAA…NSVKSSCLSD (229 aa)). N322, N329, and N355 each carry an N-linked (GlcNAc...) asparagine glycan. 2 disulfides stabilise this stretch: C398-C492 and C446-C464. Residue H429 participates in Zn(2+) binding. Residue E430 is part of the active site. Zn(2+) is bound by residues H433 and H439. In terms of domain architecture, Disintegrin spans 516–605 (GSQCGNGIVE…TCPADSFKKD (90 aa)). N-linked (GlcNAc...) asparagine glycosylation is found at N561, N593, and N640. C577 and C597 are disulfide-bonded. Residues 704 to 724 (VIGVACGVGGLLVLSILWCMI) form a helical membrane-spanning segment. Topologically, residues 725–785 (NRCRRARTVV…GPYQSATRYA (61 aa)) are cytoplasmic. A disordered region spans residues 737–785 (PPMRPWPGPMPPPPPQMGQWAGPNRGYQGLRAEPPPPYPGPYQSATRYA). Over residues 739 to 752 (MRPWPGPMPPPPPQ) the composition is skewed to pro residues.

Requires Zn(2+) as cofactor.

The protein localises to the membrane. Its function is as follows. Probable zinc protease. This is Disintegrin and metalloproteinase domain-containing protein B (ADM-B) from Aspergillus fumigatus (strain ATCC MYA-4609 / CBS 101355 / FGSC A1100 / Af293) (Neosartorya fumigata).